The chain runs to 309 residues: Homoserine kinase (309 aa).

91 to 101 is a binding site for ATP; that stretch reads PIGSGLGSSAC.

The protein belongs to the GHMP kinase family. Homoserine kinase subfamily.

Its subcellular location is the cytoplasm. The enzyme catalyses L-homoserine + ATP = O-phospho-L-homoserine + ADP + H(+). It participates in amino-acid biosynthesis; L-threonine biosynthesis; L-threonine from L-aspartate: step 4/5. Catalyzes the ATP-dependent phosphorylation of L-homoserine to L-homoserine phosphate. The polypeptide is Homoserine kinase (Buchnera aphidicola subsp. Schizaphis graminum (strain Sg)).